The sequence spans 726 residues: MGALQWLSITAAAASAVSALTPEQMIGAPRRTEVIPNPSGDTGLFSTSQWSFDTHSESTWWSLIDLESGETTTLTDDSDIEEIIWLGSDSSTLLYINSTNAQVPGGVELWIADSSDFANYKAASLSAGFLGIKSTVTDSGDVHFILRGKSYPNGTAYNDQLAETYPSTARIYDSIFVRHWDTYLTTASHAVFSGTLQSSTSDDGNVQYTSSGGLTNLVNPVKGAESPFPPFGGNDDYDLSPDGKWVTFKSKAPELPLANNTAAYVYLVPHDGSATAFAVNGPDSPATPEGVEGESNNPVFSPDSDKIAYFQMATNTYESDRNVLYVYSIADDTITPLAKDWDRSPSSVTWVDGDNLVVASQDLGRTRLFAIPGDAGTTSSPRTFTDGGSVSAQYVLSNSTLLVTSSAFWTSWSVYTASPDEGVINTLASANEIDPELSGLSSSDFEEFYFDGNWTTLQGWITYPQDFDSSKKYPLAFLIHGGPEDAWADEWNLKWHSKVFADQGYVVVQPNPTGSTGFGQQLTDAIQLNWTAGAAYDDLTKAWQYVHDTYDFIDTDNGVAAGPSFGAFMITWIQGDDFGRKFKALVSHDGPFIGDAWVETDELWFVEHEFNGTFWQARDAFHNTDPSGPSRVLAYSTPQLVIHSDKDYRIPVANGIGLFNTLQERGVPSRFLNFPDEDHWVTGQENSLVWYQQVLGWINRYSGVGGSNPDAIALEDTVNPVVDLNP.

The N-terminal stretch at 1–19 is a signal peptide; sequence MGALQWLSITAAAASAVSA. 6 N-linked (GlcNAc...) asparagine glycosylation sites follow: N97, N153, N259, N398, N453, and N529. The active-site Charge relay system is S564. N611 is a glycosylation site (N-linked (GlcNAc...) asparagine). Catalysis depends on charge relay system residues D647 and H679.

Belongs to the peptidase S9C family.

The protein localises to the secreted. In terms of biological role, extracellular dipeptidyl-peptidase which removes N-terminal dipeptides sequentially from polypeptides having unsubstituted N-termini. The protein is Probable dipeptidyl-peptidase 5 (dpp5) of Aspergillus niger.